Reading from the N-terminus, the 221-residue chain is LHFPL tetraspan subfamily member 5 protein (221 aa).

At 1–24 the chain is on the cytoplasmic side; it reads MPKLLPAQEAARIYHTNYVRNARA. A helical membrane pass occupies residues 25-45; that stretch reads MGVLWALFTLCFSILMVVTFI. Topologically, residues 46–98 are extracellular; the sequence is QPYWIGDSIDTPQAGYFGLFSYCIGNALTGELICKGSPLDFGTIPSSAFKTAM. A helical transmembrane segment spans residues 99 to 119; that stretch reads FFVGISTFLIIGSILCFSLFF. Residues 120–128 are Cytoplasmic-facing; that stretch reads FCNAATVYK. The helical transmembrane segment at 129–149 threads the bilayer; the sequence is VCAWMQLAAATGLMIGCLIYP. Topologically, residues 150–179 are extracellular; it reads DGWDSSEVKRMCGDKTDKYTLGACTVRWAY. The helical transmembrane segment at 180 to 200 threads the bilayer; the sequence is ILCIIGILDALILSFLAFVLG. Residues 201-221 lie on the Cytoplasmic side of the membrane; the sequence is NRQDNLLPSDFKVESKEEGNE.

It belongs to the LHFP family.

Its subcellular location is the cell membrane. In terms of biological role, probable component of the mechanotransducer (MET) non-specific cation channel complex. The sequence is that of LHFPL tetraspan subfamily member 5 protein from Gallus gallus (Chicken).